The sequence spans 555 residues: Suppressor of tumorigenicity 7 protein-like (555 aa).

A run of 4 helical transmembrane segments spans residues 32–52, 76–96, 504–524, and 531–551; these read APWA…YAAL, FYFA…VFEW, LPFF…LALL, and LMVV…APSV.

It belongs to the ST7 family.

The protein localises to the membrane. The protein is Suppressor of tumorigenicity 7 protein-like (ST7L) of Gallus gallus (Chicken).